Reading from the N-terminus, the 349-residue chain is GTP 3',8-cyclase (349 aa).

A Radical SAM core domain is found at 26–245; sequence GFGRAVTYLR…SSFWTLTDIP (220 aa). GTP is bound at residue Arg35. [4Fe-4S] cluster is bound by residues Cys42 and Cys46. Tyr48 lines the S-adenosyl-L-methionine pocket. Cys49 contributes to the [4Fe-4S] cluster binding site. Residue Arg84 participates in GTP binding. Residue Gly88 participates in S-adenosyl-L-methionine binding. Thr118 is a binding site for GTP. An S-adenosyl-L-methionine-binding site is contributed by Ser142. Lys178 contributes to the GTP binding site. Met212 provides a ligand contact to S-adenosyl-L-methionine. [4Fe-4S] cluster-binding residues include Cys275 and Cys278. 280–282 provides a ligand contact to GTP; that stretch reads RVR. Residue Cys292 coordinates [4Fe-4S] cluster.

This sequence belongs to the radical SAM superfamily. MoaA family. As to quaternary structure, monomer and homodimer. The cofactor is [4Fe-4S] cluster.

The enzyme catalyses GTP + AH2 + S-adenosyl-L-methionine = (8S)-3',8-cyclo-7,8-dihydroguanosine 5'-triphosphate + 5'-deoxyadenosine + L-methionine + A + H(+). It functions in the pathway cofactor biosynthesis; molybdopterin biosynthesis. Functionally, catalyzes the cyclization of GTP to (8S)-3',8-cyclo-7,8-dihydroguanosine 5'-triphosphate. The sequence is that of GTP 3',8-cyclase from Caulobacter vibrioides (strain ATCC 19089 / CIP 103742 / CB 15) (Caulobacter crescentus).